We begin with the raw amino-acid sequence, 851 residues long: DEAD-box ATP-dependent RNA helicase 29 (851 aa).

The disordered stretch occupies residues methionine 1–glycine 49. The span at serine 7–serine 20 shows a compositional bias: low complexity. Over residues methionine 24–serine 42 the composition is skewed to basic and acidic residues. The Q motif signature appears at glycine 49–arginine 77. A Helicase ATP-binding domain is found at methionine 80 to valine 253. Residue alanine 93–threonine 100 coordinates ATP. The DEAD box motif lies at aspartate 201 to aspartate 204. One can recognise a Helicase C-terminal domain in the interval lysine 277–lysine 426. The interval lysine 702–arginine 851 is disordered. Over residues arginine 733–arginine 746 the composition is skewed to basic residues. Basic and acidic residues-rich tracts occupy residues aspartate 773 to phenylalanine 787 and arginine 796 to glycine 825. Positions glycine 841–arginine 851 are enriched in basic residues.

It belongs to the DEAD box helicase family. DDX54/DBP10 subfamily.

The catalysed reaction is ATP + H2O = ADP + phosphate + H(+). This chain is DEAD-box ATP-dependent RNA helicase 29, found in Oryza sativa subsp. indica (Rice).